Consider the following 246-residue polypeptide: Probable transcriptional regulatory protein YebC (246 aa).

A disordered region spans residues 1–20; it reads MAGHSKWANTRHRKAAQDAK.

It belongs to the TACO1 family.

It localises to the cytoplasm. The sequence is that of Probable transcriptional regulatory protein YebC from Shigella boydii serotype 4 (strain Sb227).